The following is a 486-amino-acid chain: Adenylate kinase 8 (486 aa).

2 adenylate kinase regions span residues 58 to 258 (PRII…NFIC) and 269 to 471 (PRIL…SRLV). Residue 67-72 (ASGKKT) participates in ATP binding. Positions 87–112 (TFCDILKDDSDLTRAAQSYYDKKQNV) are NMP 1. AMP-binding positions include 139-142 (AIPK) and Arg-202. The interval 176–205 (GKRIDPVTGDVYHVTFMWPESEEVAQRLET) is LID 1. 278–283 (GAGRNL) is a binding site for ATP. The segment at 298–327 (CCGELLKAVSADESHMGELIKPYLESEQQV) is NMP 2. Residues 325-327 (QQV) and 354-357 (GFPR) each bind AMP. Residues 391 to 424 (LRAVDPVTGEWYHSVYKPPPGPEVQARLRFNPQH) are LID 2. Arg-392 contacts ATP. Position 432 (Arg-432) interacts with AMP.

The protein belongs to the adenylate kinase family.

Its subcellular location is the cytoplasm. The protein localises to the cytosol. The enzyme catalyses AMP + ATP = 2 ADP. It catalyses the reaction a 2'-deoxyribonucleoside 5'-diphosphate + ATP = a 2'-deoxyribonucleoside 5'-triphosphate + ADP. It carries out the reaction a ribonucleoside 5'-diphosphate + ATP = a ribonucleoside 5'-triphosphate + ADP. Functionally, nucleoside monophosphate (NMP) kinase that catalyzes the reversible transfer of the terminal phosphate group between nucleoside triphosphates and monophosphates. Has highest activity toward AMP, and weaker activity toward dAMP, CMP and dCMP. Also displays broad nucleoside diphosphate kinase activity. The protein is Adenylate kinase 8 (ak8) of Danio rerio (Zebrafish).